The primary structure comprises 391 residues: Arginine biosynthesis bifunctional protein ArgJ (391 aa).

Substrate is bound by residues T149, K172, T183, E263, N386, and S391. The Nucleophile role is filled by T183.

This sequence belongs to the ArgJ family. Heterotetramer of two alpha and two beta chains.

Its subcellular location is the cytoplasm. It carries out the reaction N(2)-acetyl-L-ornithine + L-glutamate = N-acetyl-L-glutamate + L-ornithine. It catalyses the reaction L-glutamate + acetyl-CoA = N-acetyl-L-glutamate + CoA + H(+). Its pathway is amino-acid biosynthesis; L-arginine biosynthesis; L-ornithine and N-acetyl-L-glutamate from L-glutamate and N(2)-acetyl-L-ornithine (cyclic): step 1/1. It functions in the pathway amino-acid biosynthesis; L-arginine biosynthesis; N(2)-acetyl-L-ornithine from L-glutamate: step 1/4. Its function is as follows. Catalyzes two activities which are involved in the cyclic version of arginine biosynthesis: the synthesis of N-acetylglutamate from glutamate and acetyl-CoA as the acetyl donor, and of ornithine by transacetylation between N(2)-acetylornithine and glutamate. The polypeptide is Arginine biosynthesis bifunctional protein ArgJ (Bifidobacterium longum (strain NCC 2705)).